A 1412-amino-acid chain; its full sequence is DNA-directed RNA polymerase subunit beta'' (1412 aa).

Zn(2+) is bound by residues cysteine 220, cysteine 294, cysteine 301, and cysteine 304.

This sequence belongs to the RNA polymerase beta' chain family. RpoC2 subfamily. In plastids the minimal PEP RNA polymerase catalytic core is composed of four subunits: alpha, beta, beta', and beta''. When a (nuclear-encoded) sigma factor is associated with the core the holoenzyme is formed, which can initiate transcription. Zn(2+) serves as cofactor.

It localises to the plastid. The protein localises to the chloroplast. The catalysed reaction is RNA(n) + a ribonucleoside 5'-triphosphate = RNA(n+1) + diphosphate. Functionally, DNA-dependent RNA polymerase catalyzes the transcription of DNA into RNA using the four ribonucleoside triphosphates as substrates. This chain is DNA-directed RNA polymerase subunit beta'', found in Chara vulgaris (Common stonewort).